A 265-amino-acid polypeptide reads, in one-letter code: Probable FAD synthase (265 aa).

This sequence belongs to the PAPS reductase family. FAD1 subfamily.

It carries out the reaction FMN + ATP + H(+) = FAD + diphosphate. It functions in the pathway cofactor biosynthesis; FAD biosynthesis; FAD from FMN: step 1/1. In terms of biological role, adenylates FMN to FAD. The protein is Probable FAD synthase of Schizosaccharomyces pombe (strain 972 / ATCC 24843) (Fission yeast).